Here is a 209-residue protein sequence, read N- to C-terminus: Ephrin-A2 (209 aa).

Positions 1–20 (MAPAQRPLLPLLLLLLPLRA) are cleaved as a signal peptide. Residues 30–170 (ADRYAVYWNR…RLKVYVRPTN (141 aa)) enclose the Ephrin RBD domain. N38 carries N-linked (GlcNAc...) asparagine glycosylation. Intrachain disulfides connect C69/C110 and C98/C159. N170 and N184 each carry an N-linked (GlcNAc...) asparagine glycan. N184 carries GPI-anchor amidated asparagine lipidation. Residues 185-209 (SSCSGLGGCHLFLTTVPVLWSLLGS) constitute a propeptide, removed in mature form.

It belongs to the ephrin family. In terms of assembly, binds to the receptor tyrosine kinases EPHA3, EPHA4 and EPHA5. Interacts with EPHA8; activates EPHA8. In terms of tissue distribution, expressed in myogenic progenitor cells.

It localises to the cell membrane. Its function is as follows. Cell surface GPI-bound ligand for Eph receptors, a family of receptor tyrosine kinases which are crucial for migration, repulsion and adhesion during neuronal, vascular and epithelial development. Binds promiscuously Eph receptors residing on adjacent cells, leading to contact-dependent bidirectional signaling into neighboring cells. The signaling pathway downstream of the receptor is referred to as forward signaling while the signaling pathway downstream of the ephrin ligand is referred to as reverse signaling. With the EPHA2 receptor may play a role in bone remodeling through regulation of osteoclastogenesis and osteoblastogenesis. The protein is Ephrin-A2 (Efna2) of Mus musculus (Mouse).